Consider the following 259-residue polypeptide: Protein POLYCHOME (259 aa).

Positions 236-259 (KMKSTPSAKRAEREKRVRTLMSMR) are disordered.

Interacts with APC/C activators such as APC5, FZR2, FZR3, CDC20.1 and CDC20.5. Expressed mainly in actively dividing cells (e.g. central cylinder of the root tip, young leaves and vascular tissues).

The protein resides in the nucleus. Its function is as follows. Negative regulator of the anaphase-promoting complex/cyclosome (APC/C) ubiquitin ligase required for proper mitotic progression and cell fate determination; inhibits premature cell differentiation. Prevents DNA endoreplication by promoting the maintenance of the mitotic state by preferentially inhibiting APC/C(FZR) and triggering cyclins accumulation (e.g. CYCB1-1, CYCB1-2 and CYCA2-3) in a temporal manner. Required for megagametophyte and endosperm development. Counteracts the activity of CCS52A1 thus inhibiting the turnover of CYCA2-3. Confers immunity to bacterial pathogens (e.g. Pseudomonas syringae pv. tomato DC3000), which is associated with increased expression of disease resistance (R) genes. The sequence is that of Protein POLYCHOME (PYM) from Arabidopsis thaliana (Mouse-ear cress).